Consider the following 312-residue polypeptide: Methionyl-tRNA formyltransferase (312 aa).

109 to 112 (SLLP) serves as a coordination point for (6S)-5,6,7,8-tetrahydrofolate.

This sequence belongs to the Fmt family.

The catalysed reaction is L-methionyl-tRNA(fMet) + (6R)-10-formyltetrahydrofolate = N-formyl-L-methionyl-tRNA(fMet) + (6S)-5,6,7,8-tetrahydrofolate + H(+). Its function is as follows. Attaches a formyl group to the free amino group of methionyl-tRNA(fMet). The formyl group appears to play a dual role in the initiator identity of N-formylmethionyl-tRNA by promoting its recognition by IF2 and preventing the misappropriation of this tRNA by the elongation apparatus. This chain is Methionyl-tRNA formyltransferase, found in Anaeromyxobacter sp. (strain K).